The following is a 330-amino-acid chain: MTHFNKGPSYGLSAEVKNKIASKYDQQAEEDLRNWIEEVTGLGIGTNFQLGLKDGIILCELINKLQPGSVKKVNESSLNWPQLENIGNFIKAIQAYGMKPHDIFEANDLFENGNMTQVQTTLVALAGLAKTKGFHTTIDIGVKYAEKQTRRFDEGKLKAGQSVIGLQMGTNKCASQAGMTAYGTRRHLYDPKMQTDKPFDQTTISLQMGTNKGASQAGMLAPGTRRDIYDQKLTLQPVDNSTISLQMGTNKVASQKGMSVYGLGRQVYDPKYCAAPTEPVIHNGSQGTGTNGSEISDSDYQAEYPDEYHGEYPDDYPREYQYGDDQGIDY.

Lysine 23 carries the post-translational modification N6-acetyllysine. In terms of domain architecture, Calponin-homology (CH) spans 26–130 (QQAEEDLRNW…TLVALAGLAK (105 aa)). Lysine 158 is modified (N6-methyllysine). Calponin-like repeat units lie at residues 164–189 (IGLQMGTNKCASQAGMTAYGTRRHLY), 204–229 (ISLQMGTNKGASQAGMLAPGTRRDIY), and 243–268 (ISLQMGTNKVASQKGMSVYGLGRQVY). Residues 279–330 (PVIHNGSQGTGTNGSEISDSDYQAEYPDEYHGEYPDDYPREYQYGDDQGIDY) are disordered. The span at 306-318 (DEYHGEYPDDYPR) shows a compositional bias: basic and acidic residues.

This sequence belongs to the calponin family.

Functionally, thin filament-associated protein that is implicated in the regulation and modulation of smooth muscle contraction. It is capable of binding to actin, calmodulin and tropomyosin. The interaction of calponin with actin inhibits the actomyosin Mg-ATPase activity. The polypeptide is Calponin-3 (Cnn3) (Mus musculus (Mouse)).